The sequence spans 273 residues: Small ribosomal subunit protein uS3 (273 aa).

In terms of domain architecture, KH type-2 spans 40 to 110; the sequence is IRNLFFVNYR…NLDLTINEIG (71 aa). Over residues 244–265 the composition is skewed to polar residues; sequence QVLSANKLTGSDVETSSIQALT. The disordered stretch occupies residues 244–273; that stretch reads QVLSANKLTGSDVETSSIQALTKPNKEDKQ.

The protein belongs to the universal ribosomal protein uS3 family. As to quaternary structure, part of the 30S ribosomal subunit. Forms a tight complex with proteins S10 and S14.

Binds the lower part of the 30S subunit head. Binds mRNA in the 70S ribosome, positioning it for translation. The protein is Small ribosomal subunit protein uS3 of Mycoplasma pneumoniae (strain ATCC 29342 / M129 / Subtype 1) (Mycoplasmoides pneumoniae).